We begin with the raw amino-acid sequence, 427 residues long: tRNA(Ile)-lysidine synthase (427 aa).

An ATP-binding site is contributed by 29–34 (SGGVDS).

This sequence belongs to the tRNA(Ile)-lysidine synthase family.

It is found in the cytoplasm. It catalyses the reaction cytidine(34) in tRNA(Ile2) + L-lysine + ATP = lysidine(34) in tRNA(Ile2) + AMP + diphosphate + H(+). In terms of biological role, ligates lysine onto the cytidine present at position 34 of the AUA codon-specific tRNA(Ile) that contains the anticodon CAU, in an ATP-dependent manner. Cytidine is converted to lysidine, thus changing the amino acid specificity of the tRNA from methionine to isoleucine. The polypeptide is tRNA(Ile)-lysidine synthase (Thermosipho africanus (strain TCF52B)).